A 187-amino-acid chain; its full sequence is Calmodulin-like protein 1 (187 aa).

N-acetylalanine is present on alanine 2. EF-hand domains lie at 8–43 (EQIVEFREAFSLFDKDGDGSITTKELGTVMRSLGQN), 44–79 (PTEAELQDMISEVDADSNGNIEFKEFLGLMARKLRD), 81–116 (DSEEELKEAFRVFDKDQNGFISAAELRHVMANIGER), and 117–152 (LTDEEVGEMISEADVDGDGQINYEEFVKCMMAKKRR). Ca(2+)-binding residues include aspartate 21, aspartate 23, aspartate 25, serine 27, glutamate 32, aspartate 57, aspartate 59, asparagine 61, asparagine 63, glutamate 68, aspartate 94, aspartate 96, asparagine 98, glutamate 105, aspartate 130, aspartate 132, aspartate 134, glutamine 136, and glutamate 141. Residues 153–187 (KRIEEKREHDGGSRTKSAGPSAAPASKRGQKCVIL) are disordered. The span at 154–165 (RIEEKREHDGGS) shows a compositional bias: basic and acidic residues. Positions 169-178 (SAGPSAAPAS) are enriched in low complexity. Position 184 is a cysteine methyl ester (cysteine 184). A lipid anchor (S-farnesyl cysteine) is attached at cysteine 184. Positions 185-187 (VIL) are cleaved as a propeptide — removed in mature form.

This sequence belongs to the calmodulin family. Expressed in roots, etiolated shoots and flowers.

It is found in the membrane. Calcium-binding protein that binds and activates CAMK1, a calcium/calmodulin-dependent kinase. This chain is Calmodulin-like protein 1 (CML1), found in Oryza sativa subsp. indica (Rice).